Reading from the N-terminus, the 421-residue chain is ATP-dependent RNA helicase RhlB (421 aa).

The Q motif signature appears at 9–37 (QKFSDFALHPAVIEALEKKGFHNCTPIQA). In terms of domain architecture, Helicase ATP-binding spans 40 to 219 (LPLTLEGRDV…FEQMNNAEYV (180 aa)). 53–60 (AQTGTGKT) contacts ATP. The DEAD box motif lies at 165–168 (DEAD). The region spanning 245–390 (RLLQTLLEEE…VSKYNPDALM (146 aa)) is the Helicase C-terminal domain. The interval 396-421 (PLRLTRARPGNGPRRNGPPRNRRRSG) is disordered. Positions 403–414 (RPGNGPRRNGPP) are enriched in low complexity.

It belongs to the DEAD box helicase family. RhlB subfamily. In terms of assembly, component of the RNA degradosome, which is a multiprotein complex involved in RNA processing and mRNA degradation.

The protein localises to the cytoplasm. It carries out the reaction ATP + H2O = ADP + phosphate + H(+). DEAD-box RNA helicase involved in RNA degradation. Has RNA-dependent ATPase activity and unwinds double-stranded RNA. This Klebsiella pneumoniae (strain 342) protein is ATP-dependent RNA helicase RhlB.